Consider the following 91-residue polypeptide: Small ribosomal subunit protein uS15 (91 aa).

It belongs to the universal ribosomal protein uS15 family. Part of the 30S ribosomal subunit. Forms a bridge to the 50S subunit in the 70S ribosome, contacting the 23S rRNA.

Functionally, one of the primary rRNA binding proteins, it binds directly to 16S rRNA where it helps nucleate assembly of the platform of the 30S subunit by binding and bridging several RNA helices of the 16S rRNA. Its function is as follows. Forms an intersubunit bridge (bridge B4) with the 23S rRNA of the 50S subunit in the ribosome. In Rickettsia prowazekii (strain Madrid E), this protein is Small ribosomal subunit protein uS15.